Consider the following 102-residue polypeptide: Small ribosomal subunit protein uS10 (102 aa).

The protein belongs to the universal ribosomal protein uS10 family. Part of the 30S ribosomal subunit.

Its function is as follows. Involved in the binding of tRNA to the ribosomes. This chain is Small ribosomal subunit protein uS10, found in Streptococcus suis (strain 98HAH33).